A 225-amino-acid chain; its full sequence is Insulin-induced gene 2 protein (225 aa).

Over 1-28 (MAEGETESPRPKKRGPYISSVTSQSVNV) the chain is Cytoplasmic. Residues 29-51 (VIRGVVLFFIGVFLALVLNLLQI) form a helical membrane-spanning segment. At 52 to 70 (QRNVTLFPPDVITSIFSSA) the chain is on the lumenal side. Residues 71–88 (WWVPPCCGTASAVIGLLY) traverse the membrane as a helical segment. The Cytoplasmic portion of the chain corresponds to 89 to 103 (PCIDRHLGEPHKFKR). The chain crosses the membrane as a helical span at residues 104-126 (EWSSVMRCVAVFVGINHASAKVD). At 127 to 129 (FDN) the chain is on the lumenal side. A helical transmembrane segment spans residues 130-148 (NFQFSLTLAALSVGLWWTF). The Cytoplasmic portion of the chain corresponds to 149 to 153 (DRSRS). Position 151 is a phosphoserine (Ser151). The chain crosses the membrane as a helical span at residues 154 to 175 (GFGLGVGIAFLATVVTQLLVYN). Residues 176-189 (GVYQYTSPDFLYVR) are Lumenal-facing. A helical transmembrane segment spans residues 190–207 (SWLPCIFFAGGITMGNIG). At 208–225 (RQLAMYECKVIAEKSHQE) the chain is on the cytoplasmic side. The residue at position 215 (Cys215) is a Cysteine sulfenic acid (-SOH); alternate. A Glycyl cysteine thioester (Cys-Gly) (interchain with G-Cter in ubiquitin); alternate cross-link involves residue Cys215. The KxHxx motif lies at 219–225 (AEKSHQE).

It belongs to the INSIG family. As to quaternary structure, interacts with SCAP; interaction is direct and only takes place in the presence of sterols; it prevents interaction between SCAP and the coat protein complex II (COPII). Associates with the SCAP-SREBP complex (composed of SCAP and SREBF1/SREBP1 or SREBF2/SREBP2); association is mediated via its interaction with SCAP and only takes place in the presence of sterols. Interacts with RNF139. Interacts with RNF145. Post-translationally, phosphorylation at Ser-151 by PCK1 reduces binding to oxysterol, disrupting the interaction between INSIG2 and SCAP, thereby promoting nuclear translocation of SREBP proteins (SREBF1/SREBP1 or SREBF2/SREBP2) and subsequent transcription of downstream lipogenesis-related genes. In terms of processing, polyubiquitinated by AMFR/gp78 at Cys-215 in some tissues such as adipose tissues, undifferentiated myoblasts and liver, leading to its degradation. In differentiated myotubes, Cys-215 oxidation prevents ubiquitination at the same site, resulting in protein stabilization. Oxidized at Cys-215 in differentiated myotubes, preventing ubiquitination at the same site, and resulting in protein stabilization.

The protein resides in the endoplasmic reticulum membrane. Oxysterol-binding protein that mediates feedback control of cholesterol synthesis by controlling both endoplasmic reticulum to Golgi transport of SCAP and degradation of HMGCR. Acts as a negative regulator of cholesterol biosynthesis by mediating the retention of the SCAP-SREBP complex in the endoplasmic reticulum, thereby blocking the processing of sterol regulatory element-binding proteins (SREBPs) SREBF1/SREBP1 and SREBF2/SREBP2. Binds oxysterol, including 22-hydroxycholesterol, 24-hydroxycholesterol, 25-hydroxycholesterol and 27-hydroxycholesterol, regulating interaction with SCAP and retention of the SCAP-SREBP complex in the endoplasmic reticulum. In presence of oxysterol, interacts with SCAP, retaining the SCAP-SREBP complex in the endoplasmic reticulum, thereby preventing SCAP from escorting SREBF1/SREBP1 and SREBF2/SREBP2 to the Golgi. Sterol deprivation or phosphorylation by PCK1 reduce oxysterol-binding, disrupting the interaction between INSIG2 and SCAP, thereby promoting Golgi transport of the SCAP-SREBP complex, followed by processing and nuclear translocation of SREBF1/SREBP1 and SREBF2/SREBP2. Also regulates cholesterol synthesis by regulating degradation of HMGCR: initiates the sterol-mediated ubiquitin-mediated endoplasmic reticulum-associated degradation (ERAD) of HMGCR via recruitment of the reductase to the ubiquitin ligase RNF139. The polypeptide is Insulin-induced gene 2 protein (Rattus norvegicus (Rat)).